A 497-amino-acid polypeptide reads, in one-letter code: Lysine--tRNA ligase (497 aa).

The Mg(2+) site is built by glutamate 409 and glutamate 416.

Belongs to the class-II aminoacyl-tRNA synthetase family. As to quaternary structure, homodimer. Mg(2+) is required as a cofactor.

The protein resides in the cytoplasm. It catalyses the reaction tRNA(Lys) + L-lysine + ATP = L-lysyl-tRNA(Lys) + AMP + diphosphate. This is Lysine--tRNA ligase from Streptococcus pyogenes serotype M6 (strain ATCC BAA-946 / MGAS10394).